We begin with the raw amino-acid sequence, 98 residues long: MNQTAILICCLVFLTLSGIQGIPLSRTVRCTCISISNQPVNPRSLEKLEIIPPSQFCPHVEIIATMKKKGEKRCLNPESKAIKNLLKAVSEKKSKRPP.

Positions 1-21 are cleaved as a signal peptide; that stretch reads MNQTAILICCLVFLTLSGIQG. Arg-26 bears the Citrulline mark. Cystine bridges form between Cys-30–Cys-57 and Cys-32–Cys-74.

It belongs to the intercrine alpha (chemokine CxC) family.

It localises to the secreted. Chemotactic for monocytes and T-lymphocytes. Binds to CXCR3. In Macaca nemestrina (Pig-tailed macaque), this protein is C-X-C motif chemokine 10 (CXCL10).